Consider the following 166-residue polypeptide: MISDESDRFNPRDPKPADAGKPSKSAKRREARKLATQALYQWHMAQHSLNEIEAQFRVDNDFTDVDGAYFREILHGVPAIKSEIDSALKPCMDIALEELDPVELAVLRLSTWEFIKRVDVPYRVVINEGVELAKVFGATDGHKFVNGVLDKLAPSLREAEVKANKR.

Positions 1–18 (MISDESDRFNPRDPKPAD) are enriched in basic and acidic residues. A disordered region spans residues 1 to 28 (MISDESDRFNPRDPKPADAGKPSKSAKR).

Belongs to the NusB family.

Involved in transcription antitermination. Required for transcription of ribosomal RNA (rRNA) genes. Binds specifically to the boxA antiterminator sequence of the ribosomal RNA (rrn) operons. The polypeptide is Transcription antitermination protein NusB (Pseudomonas putida (strain W619)).